The chain runs to 2715 residues: Chromodomain-helicase-DNA-binding protein 6 (2715 aa).

The segment covering 1-11 (MKMKIQKKEKQ) has biased composition (basic and acidic residues). 2 disordered regions span residues 1 to 30 (MKMK…SVNF) and 66 to 244 (EEAA…QVKR). Positions 1-747 (MKMKIQKKEK…MMELRKCCNH (747 aa)) are required for DNA-dependent ATPase activity. Polar residues predominate over residues 12 to 27 (LSNLKVLNHSPMSDAS). Basic and acidic residues predominate over residues 123-172 (EPKEPKEPRKAKEPKKAKEHKEPKQKDGAKKARKPREASGTKEAKEKRSC). Chromo domains are found at residues 292 to 343 (NIIE…KDPR) and 375 to 439 (VEVD…KHVE). The Helicase ATP-binding domain occupies 473–647 (LFNWYNRKNC…FSLLNFLEPS (175 aa)). 486–493 (DEMGLGKT) contributes to the ATP binding site. The DEAH box motif lies at 598-601 (DEAH). The Helicase C-terminal domain maps to 787–956 (LIDKLLPKLI…LSKMEVEDLL (170 aa)). The tract at residues 1318-1390 (KSLSAEQGVT…SDPDKSPWPV (73 aa)) is disordered. The span at 1321–1330 (SAEQGVTDGT) shows a compositional bias: polar residues. 2 stretches are compositionally biased toward basic and acidic residues: residues 1333–1351 (IPER…KVDG) and 1367–1376 (FSEKKDDSRA). One can recognise a Myb-like domain in the interval 1449–1503 (RWTRREQADFYRTVSSFGVVYDQEKKTFDWTQFRIISRLDKKSDESLEQYFYSFV). The segment covering 2027-2038 (FENKDDYDRDGN) has biased composition (basic and acidic residues). Disordered stretches follow at residues 2027 to 2063 (FENK…ITGD), 2116 to 2148 (SQQY…AAEH), 2321 to 2351 (QATL…QAEK), 2373 to 2422 (PGFG…FLPE), 2547 to 2602 (TSTA…PAIT), and 2648 to 2715 (VGLE…NDTN). Residues 2116–2141 (SQQYEPSGTLPTPVLTSSAGSRTSLS) are compositionally biased toward polar residues. Positions 2329–2346 (PEGPGPATSAPEPATAAS) are enriched in low complexity. Low complexity predominate over residues 2547 to 2560 (TSTAPASLSSTTKS). Basic and acidic residues-rich tracts occupy residues 2567–2588 (KTAE…EDKP) and 2706–2715 (ALKDSNNDTN).

Belongs to the SNF2/RAD54 helicase family. In terms of assembly, interacts with NFE2L2; involved in activation of the transcription. (Microbial infection) Interacts with the influenza A polymerase complex composed fo PB1, PB2 and PA. As to quaternary structure, (Microbial infection) Interacts (via N-terminus) with human papillomavirus protein E8^E2C (via C-terminus); this interaction induces transcriptional repression of the viral genome. As to expression, widely expressed.

It is found in the nucleus. Its subcellular location is the nucleoplasm. It carries out the reaction ATP + H2O = ADP + phosphate + H(+). Functionally, ATP-dependent chromatin-remodeling factor. Regulates transcription by disrupting nucleosomes in a largely non-sliding manner which strongly increases the accessibility of chromatin; nucleosome disruption requires ATP. Activates transcription of specific genes in response to oxidative stress through interaction with NFE2L2. In terms of biological role, (Microbial infection) Acts as a transcriptional repressor of different viruses including influenza virus or papillomavirus. During influenza virus infection, the viral polymerase complex localizes CHD6 to inactive chromatin where it gets degraded in a proteasome independent-manner. The polypeptide is Chromodomain-helicase-DNA-binding protein 6 (CHD6) (Homo sapiens (Human)).